The chain runs to 873 residues: Leucine--tRNA ligase (873 aa).

The 'HIGH' region signature appears at 42–52; that stretch reads PYPSGKLHMGH. A disordered region spans residues 624–643; it reads PVEIGGTEKMSKSKNNGVDP. The 'KMSKS' region signature appears at 632–636; it reads KMSKS. Lys-635 provides a ligand contact to ATP.

It belongs to the class-I aminoacyl-tRNA synthetase family.

The protein resides in the cytoplasm. The catalysed reaction is tRNA(Leu) + L-leucine + ATP = L-leucyl-tRNA(Leu) + AMP + diphosphate. This is Leucine--tRNA ligase from Pseudomonas aeruginosa (strain LESB58).